The primary structure comprises 259 residues: Ribonuclease HII (259 aa).

Residues 70 to 258 (TLIAGIDEVG…VKSLVLGKKE (189 aa)) form the RNase H type-2 domain. 3 residues coordinate a divalent metal cation: Asp-76, Glu-77, and Asp-168.

The protein belongs to the RNase HII family. It depends on Mn(2+) as a cofactor. The cofactor is Mg(2+).

The protein resides in the cytoplasm. It catalyses the reaction Endonucleolytic cleavage to 5'-phosphomonoester.. Functionally, endonuclease that specifically degrades the RNA of RNA-DNA hybrids. In Streptococcus pneumoniae (strain P1031), this protein is Ribonuclease HII.